A 177-amino-acid polypeptide reads, in one-letter code: Large ribosomal subunit protein uL6 (177 aa).

This sequence belongs to the universal ribosomal protein uL6 family. In terms of assembly, part of the 50S ribosomal subunit.

Its function is as follows. This protein binds to the 23S rRNA, and is important in its secondary structure. It is located near the subunit interface in the base of the L7/L12 stalk, and near the tRNA binding site of the peptidyltransferase center. This is Large ribosomal subunit protein uL6 from Brucella abortus (strain S19).